We begin with the raw amino-acid sequence, 339 residues long: Ketol-acid reductoisomerase (NADP(+)) (339 aa).

The region spanning 1 to 182 (MRVYYDRDAD…GGGRAGIIET (182 aa)) is the KARI N-terminal Rossmann domain. Residues 24–27 (YGSQ), R48, S51, T53, and 83–86 (DELQ) contribute to the NADP(+) site. H108 is an active-site residue. G134 is an NADP(+) binding site. Residues 183–328 (SFKEECETDL…AKLREMMPWI (146 aa)) form the KARI C-terminal knotted domain. D191, E195, E227, and E231 together coordinate Mg(2+). Residue S252 participates in substrate binding.

Belongs to the ketol-acid reductoisomerase family. Mg(2+) serves as cofactor.

The enzyme catalyses (2R)-2,3-dihydroxy-3-methylbutanoate + NADP(+) = (2S)-2-acetolactate + NADPH + H(+). It catalyses the reaction (2R,3R)-2,3-dihydroxy-3-methylpentanoate + NADP(+) = (S)-2-ethyl-2-hydroxy-3-oxobutanoate + NADPH + H(+). It participates in amino-acid biosynthesis; L-isoleucine biosynthesis; L-isoleucine from 2-oxobutanoate: step 2/4. Its pathway is amino-acid biosynthesis; L-valine biosynthesis; L-valine from pyruvate: step 2/4. Involved in the biosynthesis of branched-chain amino acids (BCAA). Catalyzes an alkyl-migration followed by a ketol-acid reduction of (S)-2-acetolactate (S2AL) to yield (R)-2,3-dihydroxy-isovalerate. In the isomerase reaction, S2AL is rearranged via a Mg-dependent methyl migration to produce 3-hydroxy-3-methyl-2-ketobutyrate (HMKB). In the reductase reaction, this 2-ketoacid undergoes a metal-dependent reduction by NADPH to yield (R)-2,3-dihydroxy-isovalerate. The sequence is that of Ketol-acid reductoisomerase (NADP(+)) from Rhodopseudomonas palustris (strain BisB5).